Here is a 77-residue protein sequence, read N- to C-terminus: Large ribosomal subunit protein bL31 (77 aa).

This sequence belongs to the bacterial ribosomal protein bL31 family. Type A subfamily. Part of the 50S ribosomal subunit.

In terms of biological role, binds the 23S rRNA. This Microcystis aeruginosa (strain NIES-843 / IAM M-2473) protein is Large ribosomal subunit protein bL31.